The primary structure comprises 235 residues: NAD(P)H-hydrate epimerase (235 aa).

The YjeF N-terminal domain maps to 18–221 (AAKIDEQLFS…GLVEEHGLQM (204 aa)). Position 65–69 (65–69 (NNGGD)) interacts with (6S)-NADPHX. Asn66 and Asp127 together coordinate K(+). Residues 131 to 137 (GFSFKPP) and Asp160 each bind (6S)-NADPHX. Ser163 contacts K(+).

This sequence belongs to the NnrE/AIBP family. The cofactor is K(+).

The enzyme catalyses (6R)-NADHX = (6S)-NADHX. It carries out the reaction (6R)-NADPHX = (6S)-NADPHX. Its function is as follows. Catalyzes the epimerization of the S- and R-forms of NAD(P)HX, a damaged form of NAD(P)H that is a result of enzymatic or heat-dependent hydration. This is a prerequisite for the S-specific NAD(P)H-hydrate dehydratase to allow the repair of both epimers of NAD(P)HX. The sequence is that of NAD(P)H-hydrate epimerase from Caenorhabditis briggsae.